The primary structure comprises 842 residues: Protein translocase subunit SecA (842 aa).

Residues Gln-85, 103–107, and Asp-493 each bind ATP; that span reads GEGKT. Cys-825, Cys-827, Cys-836, and His-837 together coordinate Zn(2+).

It belongs to the SecA family. As to quaternary structure, monomer and homodimer. Part of the essential Sec protein translocation apparatus which comprises SecA, SecYEG and auxiliary proteins SecDF. Other proteins may also be involved. It depends on Zn(2+) as a cofactor.

The protein localises to the cell membrane. It localises to the cytoplasm. It carries out the reaction ATP + H2O + cellular proteinSide 1 = ADP + phosphate + cellular proteinSide 2.. In terms of biological role, part of the Sec protein translocase complex. Interacts with the SecYEG preprotein conducting channel. Has a central role in coupling the hydrolysis of ATP to the transfer of proteins into and across the cell membrane, serving as an ATP-driven molecular motor driving the stepwise translocation of polypeptide chains across the membrane. The chain is Protein translocase subunit SecA from Streptococcus equi subsp. zooepidemicus (strain H70).